The sequence spans 292 residues: Glycine--tRNA ligase alpha subunit (292 aa).

This sequence belongs to the class-II aminoacyl-tRNA synthetase family. Tetramer of two alpha and two beta subunits.

It is found in the cytoplasm. It catalyses the reaction tRNA(Gly) + glycine + ATP = glycyl-tRNA(Gly) + AMP + diphosphate. This chain is Glycine--tRNA ligase alpha subunit, found in Pelotomaculum thermopropionicum (strain DSM 13744 / JCM 10971 / SI).